A 347-amino-acid polypeptide reads, in one-letter code: Putative adhesin P1-like protein MPN_099 (347 aa).

Residues 282 to 300 (FGTDHSTQPQPQSLKTTTP) are compositionally biased toward polar residues. The disordered stretch occupies residues 282-302 (FGTDHSTQPQPQSLKTTTPVF).

This sequence belongs to the adhesin P1 family.

The protein is Putative adhesin P1-like protein MPN_099 of Mycoplasma pneumoniae (strain ATCC 29342 / M129 / Subtype 1) (Mycoplasmoides pneumoniae).